The sequence spans 66 residues: Cytochrome c oxidase subunit 26, mitochondrial (66 aa).

The N-terminal 8 residues, 1–8 (MFFSQVLR), are a transit peptide targeting the mitochondrion. Residues 9-27 (SSARAAPIKRYTGGRIGES) are Mitochondrial matrix-facing. Residues 28 to 64 (WVITEGRRLIPEIFQWSAVLSVCLGWPGAVYFFSKAR) traverse the membrane as a helical segment. At 65-66 (KA) the chain is on the mitochondrial intermembrane side.

It belongs to the fungal cytochrome c oxidase subunit 26 family. As to quaternary structure, component of the cytochrome c oxidase (complex IV, CIV), a multisubunit enzyme composed of 12 subunits. The complex is composed of a catalytic core of 3 subunits COX1, COX2 and COX3, encoded in the mitochondrial DNA, and 9 supernumerary subunits COX4, COX5A (or COX5B), COX6, COX7, COX8, COX9, COX12, COX13 and COX26, which are encoded in the nuclear genome. The complex exists as a monomer or a dimer and forms supercomplexes (SCs) in the inner mitochondrial membrane with a dimer of ubiquinol-cytochrome c oxidoreductase (cytochrome b-c1 complex, complex III, CIII), resulting in 2 different assemblies (supercomplexes III(2)IV and III(2)IV(2)).

Its subcellular location is the mitochondrion inner membrane. Component of the cytochrome c oxidase, the last enzyme in the mitochondrial electron transport chain which drives oxidative phosphorylation. The respiratory chain contains 3 multisubunit complexes succinate dehydrogenase (complex II, CII), ubiquinol-cytochrome c oxidoreductase (cytochrome b-c1 complex, complex III, CIII) and cytochrome c oxidase (complex IV, CIV), that cooperate to transfer electrons derived from NADH and succinate to molecular oxygen, creating an electrochemical gradient over the inner membrane that drives transmembrane transport and the ATP synthase. Cytochrome c oxidase is the component of the respiratory chain that catalyzes the reduction of oxygen to water. Electrons originating from reduced cytochrome c in the intermembrane space (IMS) are transferred via the dinuclear copper A center (CU(A)) of COX2 and heme A of COX1 to the active site in COX1, a binuclear center (BNC) formed by heme A3 and copper B (CU(B)). The BNC reduces molecular oxygen to 2 water molecules using 4 electrons from cytochrome c in the IMS and 4 protons from the mitochondrial matrix. The sequence is that of Cytochrome c oxidase subunit 26, mitochondrial (COX26) from Saccharomyces cerevisiae (strain ATCC 204508 / S288c) (Baker's yeast).